We begin with the raw amino-acid sequence, 1013 residues long: Ephrin type-B receptor 6 (1013 aa).

The N-terminal stretch at 1–31 (MASENTAGSGSRVAGMVYSLWLLVLGPSVLA) is a signal peptide. The Extracellular segment spans residues 32 to 590 (LEEVLLDTTG…LPEKLSLVIG (559 aa)). The Eph LBD domain occupies 33–231 (EEVLLDTTGE…FSYTCPSVLR (199 aa)). 2 Fibronectin type-III domains span residues 363–478 (PPSA…TSHE) and 479–574 (VPSA…TLPQ). Asparagine 472 is a glycosylation site (N-linked (GlcNAc...) asparagine). A helical membrane pass occupies residues 591–611 (SILGALAFLLLAAITVLAVIF). Topologically, residues 612–1013 (QRKRRGTGYT…HLRQPGSVEV (402 aa)) are cytoplasmic. Residues 662-911 (IKIEEVIGAG…QLVAAFDKMI (250 aa)) enclose the Protein kinase domain. 668-676 (IGAGSFGEV) is a binding site for ATP. Positions 940-1004 (PCLDSPQAWL…LHNIQLLQQH (65 aa)) constitute an SAM domain. Residues 1011-1013 (VEV) carry the PDZ-binding motif.

The protein belongs to the protein kinase superfamily. Tyr protein kinase family. Ephrin receptor subfamily. Interacts with CBL and EPHB1. Interacts with FYN; this interaction takes place in a ligand-independent manner. In terms of processing, ligand-binding increases phosphorylation on tyrosine residues. Phosphorylation on tyrosine residues is mediated by transphosphorylation by the catalytically active EPHB1 in a ligand-independent manner. Tyrosine phosphorylation of the receptor may act as a switch on the functional transition from cell adhesion/attraction to de-adhesion/repulsion.

It is found in the membrane. Kinase-defective receptor for members of the ephrin-B family. Binds to ephrin-B1 and ephrin-B2. Modulates cell adhesion and migration by exerting both positive and negative effects upon stimulation with ephrin-B2. Inhibits JNK activation, T-cell receptor-induced IL-2 secretion and CD25 expression upon stimulation with ephrin-B2. This is Ephrin type-B receptor 6 (Ephb6) from Rattus norvegicus (Rat).